The following is a 193-amino-acid chain: Imidazoleglycerol-phosphate dehydratase (193 aa).

It belongs to the imidazoleglycerol-phosphate dehydratase family.

It is found in the cytoplasm. The catalysed reaction is D-erythro-1-(imidazol-4-yl)glycerol 3-phosphate = 3-(imidazol-4-yl)-2-oxopropyl phosphate + H2O. Its pathway is amino-acid biosynthesis; L-histidine biosynthesis; L-histidine from 5-phospho-alpha-D-ribose 1-diphosphate: step 6/9. The sequence is that of Imidazoleglycerol-phosphate dehydratase from Sulfolobus acidocaldarius (strain ATCC 33909 / DSM 639 / JCM 8929 / NBRC 15157 / NCIMB 11770).